A 629-amino-acid polypeptide reads, in one-letter code: tRNA uridine 5-carboxymethylaminomethyl modification enzyme MnmG (629 aa).

Residues 14-19 (GAGHAG), Val126, and Ser181 contribute to the FAD site. 273–287 (GPRYCPSIEDKVVRF) is a binding site for NAD(+). Gln370 is a binding site for FAD.

The protein belongs to the MnmG family. Homodimer. Heterotetramer of two MnmE and two MnmG subunits. FAD serves as cofactor.

It is found in the cytoplasm. Its function is as follows. NAD-binding protein involved in the addition of a carboxymethylaminomethyl (cmnm) group at the wobble position (U34) of certain tRNAs, forming tRNA-cmnm(5)s(2)U34. This Bacillus cereus (strain ZK / E33L) protein is tRNA uridine 5-carboxymethylaminomethyl modification enzyme MnmG.